Consider the following 252-residue polypeptide: tRNA (guanine-N(1)-)-methyltransferase (252 aa).

Residues glycine 113 and 133–138 each bind S-adenosyl-L-methionine; that span reads VGDFVL.

This sequence belongs to the RNA methyltransferase TrmD family. In terms of assembly, homodimer.

It localises to the cytoplasm. It catalyses the reaction guanosine(37) in tRNA + S-adenosyl-L-methionine = N(1)-methylguanosine(37) in tRNA + S-adenosyl-L-homocysteine + H(+). In terms of biological role, specifically methylates guanosine-37 in various tRNAs. The chain is tRNA (guanine-N(1)-)-methyltransferase from Francisella tularensis subsp. holarctica (strain FTNF002-00 / FTA).